The primary structure comprises 171 residues: Phosphopantetheine adenylyltransferase (171 aa).

T9 lines the substrate pocket. ATP-binding positions include 9 to 10 (TF) and H17. K41, L78, and R92 together coordinate substrate. ATP contacts are provided by residues 93–95 (GLR), E103, and 128–134 (HQAIASK).

This sequence belongs to the bacterial CoaD family. As to quaternary structure, homohexamer. Requires Mg(2+) as cofactor.

The protein resides in the cytoplasm. The catalysed reaction is (R)-4'-phosphopantetheine + ATP + H(+) = 3'-dephospho-CoA + diphosphate. Its pathway is cofactor biosynthesis; coenzyme A biosynthesis; CoA from (R)-pantothenate: step 4/5. Reversibly transfers an adenylyl group from ATP to 4'-phosphopantetheine, yielding dephospho-CoA (dPCoA) and pyrophosphate. The polypeptide is Phosphopantetheine adenylyltransferase (Dinoroseobacter shibae (strain DSM 16493 / NCIMB 14021 / DFL 12)).